The primary structure comprises 73 residues: Omega-conotoxin GVIA (73 aa).

Positions 1-22 are cleaved as a signal peptide; sequence MKLTCVVIVAVLLLTACQLITA. Positions 23–45 are excised as a propeptide; sequence DDSRGTQKHRALGSTTELSLSTR. Disulfide bonds link cysteine 46–cysteine 61, cysteine 53–cysteine 64, and cysteine 60–cysteine 71. Proline 49, proline 55, and proline 66 each carry 4-hydroxyproline. A Tyrosine amide; in form omega-conotoxin GVIA modification is found at tyrosine 72.

Belongs to the conotoxin O1 superfamily. Expressed by the venom duct.

The protein localises to the secreted. Functionally, omega-conotoxins act at presynaptic membranes, they bind and block voltage-gated calcium channels (Cav). This toxin blocks N-type calcium channels (Cav2.2/CACNA1B) with a high potency (it displaces [125I]GVIA with an IC(50)=3.7-38 pM). The protein is Omega-conotoxin GVIA of Conus geographus (Geography cone).